A 360-amino-acid chain; its full sequence is tRNA N6-adenosine threonylcarbamoyltransferase (360 aa).

His111 and His115 together coordinate Fe cation. Residues 134–138 (LVSGG), Asp167, Gly180, Asp184, and Asn279 each bind substrate. Fe cation is bound at residue Asp307.

The protein belongs to the KAE1 / TsaD family. The cofactor is Fe(2+).

It is found in the cytoplasm. It catalyses the reaction L-threonylcarbamoyladenylate + adenosine(37) in tRNA = N(6)-L-threonylcarbamoyladenosine(37) in tRNA + AMP + H(+). Its function is as follows. Required for the formation of a threonylcarbamoyl group on adenosine at position 37 (t(6)A37) in tRNAs that read codons beginning with adenine. Is involved in the transfer of the threonylcarbamoyl moiety of threonylcarbamoyl-AMP (TC-AMP) to the N6 group of A37, together with TsaE and TsaB. TsaD likely plays a direct catalytic role in this reaction. This chain is tRNA N6-adenosine threonylcarbamoyltransferase, found in Acaryochloris marina (strain MBIC 11017).